We begin with the raw amino-acid sequence, 399 residues long: Protein LIGULELESS 1 (399 aa).

The interval 1-28 (MMNLSAAANGRDEFPPYVVPSNAAAPPP) is disordered. Positions 15 to 24 (PPYVVPSNAA) are enriched in low complexity. An SBP-type zinc finger spans residues 182–260 (PPRCQAEGCK…ADHNRRRRKS (79 aa)). Cysteine 185, cysteine 190, cysteine 207, histidine 210, cysteine 227, cysteine 230, histidine 234, and cysteine 246 together coordinate Zn(2+). The Bipartite nuclear localization signal signature appears at 243-259 (KKSCRKRLADHNRRRRK). Residues 250–292 (LADHNRRRRKSKPSDADAGDKKRAHANKAAAAKDKAESSSKNM) are disordered. The span at 261–270 (KPSDADAGDK) shows a compositional bias: basic and acidic residues.

As to expression, leaf ligular region, blade and sheath.

It is found in the nucleus. Functionally, involved in the formation of ligules and auricles during leaf organogenesis. The sequence is that of Protein LIGULELESS 1 (LG1) from Zea mays (Maize).